Consider the following 164-residue polypeptide: Kunitz-type trypsin inhibitor BrTI (164 aa).

It belongs to the leguminous Kunitz-type inhibitor family.

Its function is as follows. Inhibitor of trypsin and human plasma kallikrein with a Ki of 2.9 nM and 14.0 nM, respectively. Does not inhibit chymotrypsin, porcine pancreatic elastas, human neutrophil elastase, coagulation factor Xa, human thrombin, porcine pancreatic kallikrein or plasmin. This is Kunitz-type trypsin inhibitor BrTI from Bauhinia rufa (Orchid tree).